We begin with the raw amino-acid sequence, 456 residues long: Riboflavin transporter RibZ (456 aa).

14 helical membrane-spanning segments follow: residues 5-25, 45-65, 78-98, 105-125, 134-154, 158-178, 192-212, 220-240, 260-280, 289-309, 321-341, 343-363, 385-405, and 428-448; these read WIVL…GSIL, WVVT…GKLG, FFIF…STLI, AVGA…AFPA, ITGA…GIIL, GWPS…FLGI, SFDI…LLAM, LYLG…EVKF, IIGV…PFYL, MMAG…APIA, ILTA…LLKA, SPLY…GAFS, FLAT…SSFF, and QSYW…VFFM.

Belongs to the major facilitator superfamily.

It localises to the cell membrane. In terms of biological role, transports riboflavin into the cell. The chain is Riboflavin transporter RibZ from Clostridioides difficile (strain 630) (Peptoclostridium difficile).